Here is a 425-residue protein sequence, read N- to C-terminus: Dihydroorotase (425 aa).

The Zn(2+) site is built by histidine 56 and histidine 58. Substrate is bound by residues 58–60 (HYR) and asparagine 90. Residues aspartate 148, histidine 175, and histidine 228 each contribute to the Zn(2+) site. Asparagine 274 is a substrate binding site. Residue aspartate 301 participates in Zn(2+) binding. Aspartate 301 is a catalytic residue. Residues histidine 305 and 319-320 (FG) contribute to the substrate site.

The protein belongs to the metallo-dependent hydrolases superfamily. DHOase family. Class I DHOase subfamily. The cofactor is Zn(2+).

It carries out the reaction (S)-dihydroorotate + H2O = N-carbamoyl-L-aspartate + H(+). The protein operates within pyrimidine metabolism; UMP biosynthesis via de novo pathway; (S)-dihydroorotate from bicarbonate: step 3/3. In terms of biological role, catalyzes the reversible cyclization of carbamoyl aspartate to dihydroorotate. In Lactobacillus delbrueckii subsp. bulgaricus (strain ATCC BAA-365 / Lb-18), this protein is Dihydroorotase.